The primary structure comprises 415 residues: 3-oxoacyl-[acyl-carrier-protein] synthase 2 (415 aa).

The Ketosynthase family 3 (KS3) domain occupies 3–412 (KRRVVVTGMG…GTNGSLVFKK (410 aa)). Active-site for beta-ketoacyl synthase activity residues include cysteine 164, histidine 304, and histidine 342.

It belongs to the thiolase-like superfamily. Beta-ketoacyl-ACP synthases family. As to quaternary structure, homodimer.

The enzyme catalyses a fatty acyl-[ACP] + malonyl-[ACP] + H(+) = a 3-oxoacyl-[ACP] + holo-[ACP] + CO2. The catalysed reaction is (9Z)-hexadecenoyl-[ACP] + malonyl-[ACP] + H(+) = 3-oxo-(11Z)-octadecenoyl-[ACP] + holo-[ACP] + CO2. Its pathway is lipid metabolism; fatty acid biosynthesis. Involved in the type II fatty acid elongation cycle. Catalyzes the elongation of a wide range of acyl-ACP by the addition of two carbons from malonyl-ACP to an acyl acceptor. Can efficiently catalyze the conversion of palmitoleoyl-ACP (cis-hexadec-9-enoyl-ACP) to cis-vaccenoyl-ACP (cis-octadec-11-enoyl-ACP), an essential step in the thermal regulation of fatty acid composition. The polypeptide is 3-oxoacyl-[acyl-carrier-protein] synthase 2 (fabF) (Vibrio harveyi (Beneckea harveyi)).